Reading from the N-terminus, the 313-residue chain is tRNA dimethylallyltransferase (313 aa).

13 to 20 (GPTASGKT) contacts ATP. Substrate is bound at residue 15–20 (TASGKT). 4 interaction with substrate tRNA regions span residues 38 to 41 (DSAL), 162 to 166 (QRLSR), 243 to 248 (RCVGYR), and 276 to 283 (KRQITWLR).

This sequence belongs to the IPP transferase family. Monomer. The cofactor is Mg(2+).

It carries out the reaction adenosine(37) in tRNA + dimethylallyl diphosphate = N(6)-dimethylallyladenosine(37) in tRNA + diphosphate. Its function is as follows. Catalyzes the transfer of a dimethylallyl group onto the adenine at position 37 in tRNAs that read codons beginning with uridine, leading to the formation of N6-(dimethylallyl)adenosine (i(6)A). In Aliivibrio salmonicida (strain LFI1238) (Vibrio salmonicida (strain LFI1238)), this protein is tRNA dimethylallyltransferase.